The chain runs to 379 residues: Phospho-N-acetylmuramoyl-pentapeptide-transferase (379 aa).

The next 10 helical transmembrane spans lie at 27 to 47 (FRTAFASLTALFMGLIIGPAV), 76 to 96 (TMGGVLITIAIIVPTLLWADL), 100 to 120 (FVWIAMLATIAFGAIGFTDDY), 135 to 155 (AKMGLQILVAILVAISLVLVQ), 185 to 205 (PHIWIIAYIPFLAFVAIVLVG), 218 to 238 (GLAIGCTVIAAGALTVLTYVS), 255 to 275 (VGELSIFCGAMVGSAIGFLWY), 283 to 303 (FMGDVGSLALGGAIGTVAVII), 307 to 327 (LLLPFIGGVFVLEALSVILQV), and 356 to 376 (KIIVRFWIASLVFALFALTTL).

Belongs to the glycosyltransferase 4 family. MraY subfamily. Mg(2+) is required as a cofactor.

It localises to the cell inner membrane. The catalysed reaction is UDP-N-acetyl-alpha-D-muramoyl-L-alanyl-gamma-D-glutamyl-meso-2,6-diaminopimeloyl-D-alanyl-D-alanine + di-trans,octa-cis-undecaprenyl phosphate = di-trans,octa-cis-undecaprenyl diphospho-N-acetyl-alpha-D-muramoyl-L-alanyl-D-glutamyl-meso-2,6-diaminopimeloyl-D-alanyl-D-alanine + UMP. The protein operates within cell wall biogenesis; peptidoglycan biosynthesis. In terms of biological role, catalyzes the initial step of the lipid cycle reactions in the biosynthesis of the cell wall peptidoglycan: transfers peptidoglycan precursor phospho-MurNAc-pentapeptide from UDP-MurNAc-pentapeptide onto the lipid carrier undecaprenyl phosphate, yielding undecaprenyl-pyrophosphoryl-MurNAc-pentapeptide, known as lipid I. This chain is Phospho-N-acetylmuramoyl-pentapeptide-transferase, found in Koribacter versatilis (strain Ellin345).